Consider the following 425-residue polypeptide: Protein PTI1 (425 aa).

Residue Ser-272 is modified to Phosphoserine.

In terms of assembly, component of the cleavage and polyadenylation factor (CPF) complex, which is composed of PTI1, SYC1, SSU72, GLC7, MPE1, REF2, PFS2, PTA1, YSH1/BRR5, SWD2, CFT2/YDH1, YTH1, CFT1/YHH1, FIP1 and PAP1. Component of the APT complex, which is a subcomplex of CPF, and is composed of PTI1, SYC1, SSU72, GLC7, REF2, PTA1 and SWD2.

The protein resides in the nucleus. Functionally, component of the cleavage and polyadenylation factor (CPF) complex, which plays a key role in polyadenylation-dependent pre-mRNA 3'-end formation and cooperates with cleavage factors including the CFIA complex and NAB4/CFIB. Component of the APT complex, which may be involved in polyadenylation-independent transcript 3'-end formation. PTI1 is required for 3'-end formation of snoRNAs. The protein is Protein PTI1 (PTI1) of Saccharomyces cerevisiae (strain ATCC 204508 / S288c) (Baker's yeast).